Consider the following 422-residue polypeptide: Glutamyl-tRNA reductase (422 aa).

Residues 49-52 (TCNR), serine 108, 113-115 (EPQ), and glutamine 119 each bind substrate. Cysteine 50 acts as the Nucleophile in catalysis. Residue 188-193 (GAGQTI) coordinates NADP(+).

The protein belongs to the glutamyl-tRNA reductase family. As to quaternary structure, homodimer.

It catalyses the reaction (S)-4-amino-5-oxopentanoate + tRNA(Glu) + NADP(+) = L-glutamyl-tRNA(Glu) + NADPH + H(+). It participates in porphyrin-containing compound metabolism; protoporphyrin-IX biosynthesis; 5-aminolevulinate from L-glutamyl-tRNA(Glu): step 1/2. Functionally, catalyzes the NADPH-dependent reduction of glutamyl-tRNA(Glu) to glutamate 1-semialdehyde (GSA). This Marinomonas sp. (strain MWYL1) protein is Glutamyl-tRNA reductase.